An 888-amino-acid chain; its full sequence is 3-hydroxy-3-methylglutaryl-coenzyme A reductase (888 aa).

The Cytoplasmic segment spans residues 1–9 (MLSRLFRMH). The helical transmembrane segment at 10–39 (GLFVASHPWEVIVGTVTLTICMMSMNMFTG) threads the bilayer. Topologically, residues 40–56 (NNKICGWNYECPKLEED) are lumenal. The helical transmembrane segment at 57 to 78 (VLSSDIIILTITRCIAILYIYF) threads the bilayer. The SSD domain maps to 61-218 (DIIILTITRC…MTFFPACVSL (158 aa)). The short motif at 75–78 (YIYF) is the INSIG-binding motif element. The Cytoplasmic portion of the chain corresponds to 79–89 (QFQNLRQLGSK). A Glycyl lysine isopeptide (Lys-Gly) (interchain with G-Cter in ubiquitin) cross-link involves residue K89. The helical transmembrane segment at 90–114 (YILGIAGLFTIFSSFVFSTVVIHFL) threads the bilayer. Residues 115 to 123 (DKELTGLNE) lie on the Lumenal side of the membrane. The chain crosses the membrane as a helical span at residues 124 to 149 (ALPFFLLLVDLSRASALAKFALSSNS). The Cytoplasmic portion of the chain corresponds to 150 to 159 (QDEVRENIAR). A helical transmembrane segment spans residues 160-187 (GMAILGPTFTLDALVECLVIGVGTMSGV). The Lumenal portion of the chain corresponds to 188–191 (RQLE). Residues 192–220 (IMCCFGCMSVLANYFVFMTFFPACVSLVL) form a helical membrane-spanning segment. The Cytoplasmic segment spans residues 221-248 (ELSRESREGRPIWQLSHFARVLEEEENK). Residue K248 forms a Glycyl lysine isopeptide (Lys-Gly) (interchain with G-Cter in ubiquitin) linkage. A helical transmembrane segment spans residues 249-275 (PNPVTQRVKMIMSLGLVLVHAHSRWIA). The Lumenal segment spans residues 276 to 314 (DPSPQNSTADNSKVSLGLDENVSKRIEPSVSLWQFYLSK). Residues N281 and N296 are each glycosylated (N-linked (GlcNAc...) asparagine). A helical membrane pass occupies residues 315–339 (MISMDIEQVITLSLALLLAVKYIFF). Residues 340–888 (EQAETESTLS…LQGTCTKKAA (549 aa)) are Cytoplasmic-facing. Residues E559, K691, and D767 each act as charge relay system in the active site. Catalysis depends on H866, which acts as the Proton donor. S872 is modified (phosphoserine; by AMPK).

The protein belongs to the HMG-CoA reductase family. Homotetramer. Homodimer. Interacts (via its SSD) with INSIG1; the interaction, accelerated by sterols, leads to the recruitment of HMGCR to AMFR/gp78 for its ubiquitination by the sterol-mediated ERAD pathway. Interacts with UBIAD1. Undergoes sterol-mediated ubiquitination and ER-associated degradation (ERAD). Accumulation of sterols in the endoplasmic reticulum (ER) membrane, triggers binding of the reductase to the ER membrane protein INSIG1 or INSIG2. The INSIG1 binding leads to the recruitment of the ubiquitin ligase, AMFR/gp78, RNF139 or RNF145, initiating ubiquitination of the reductase. The ubiquitinated reductase is then extracted from the ER membrane and delivered to cytosolic 26S proteosomes by a mechanism probably mediated by the ATPase Valosin-containing protein VCP/p97. The INSIG2-binding leads to the recruitment of the ubiquitin ligase RNF139, initiating ubiquitination of the reductase. Lys-248 is the main site of ubiquitination. Ubiquitination is enhanced by the presence of a geranylgeranylated protein. In terms of processing, N-glycosylated. Deglycosylated by NGLY1 on release from the endoplasmic reticulum (ER) in a sterol-mediated manner. Post-translationally, phosphorylated. Phosphorylation at Ser-872 reduces the catalytic activity.

The protein resides in the endoplasmic reticulum membrane. It is found in the peroxisome membrane. The enzyme catalyses (R)-mevalonate + 2 NADP(+) + CoA = (3S)-3-hydroxy-3-methylglutaryl-CoA + 2 NADPH + 2 H(+). It participates in metabolic intermediate biosynthesis; (R)-mevalonate biosynthesis; (R)-mevalonate from acetyl-CoA: step 3/3. Its activity is regulated as follows. Regulated by a negative feedback mechanism through sterols and non-sterol metabolites derived from mevalonate. Phosphorylation at Ser-872 down-regulates the catalytic activity. Catalyzes the conversion of (3S)-hydroxy-3-methylglutaryl-CoA (HMG-CoA) to mevalonic acid, the rate-limiting step in the synthesis of cholesterol and other isoprenoids, thus plays a critical role in cellular cholesterol homeostasis. This Bos taurus (Bovine) protein is 3-hydroxy-3-methylglutaryl-coenzyme A reductase (HMGCR).